The following is a 340-amino-acid chain: Transcription initiation factor IIB (340 aa).

A TFIIB-type zinc finger spans residues 16–49 (VKMICSECREDPPNLVEEFSSGDTVCGSCGLVLG). Residues cysteine 20, cysteine 23, cysteine 41, and cysteine 44 each coordinate Zn(2+). Tandem repeats lie at residues 128-204 (MCDA…TLQR) and 239-315 (FCNR…LLHA).

The protein belongs to the TFIIB family. In terms of assembly, associates with TFIID-IIA (DA complex) to form TFIID-IIA-IIB (DAB-complex) which is then recognized by polymerase II.

It is found in the nucleus. Its function is as follows. General factor that plays a major role in the activation of eukaryotic genes transcribed by RNA polymerase II. This is Transcription initiation factor IIB (sua7) from Schizosaccharomyces pombe (strain 972 / ATCC 24843) (Fission yeast).